Reading from the N-terminus, the 84-residue chain is Exodeoxyribonuclease 7 small subunit (84 aa).

This sequence belongs to the XseB family. Heterooligomer composed of large and small subunits.

The protein resides in the cytoplasm. It catalyses the reaction Exonucleolytic cleavage in either 5'- to 3'- or 3'- to 5'-direction to yield nucleoside 5'-phosphates.. Functionally, bidirectionally degrades single-stranded DNA into large acid-insoluble oligonucleotides, which are then degraded further into small acid-soluble oligonucleotides. The polypeptide is Exodeoxyribonuclease 7 small subunit (Haemophilus influenzae (strain 86-028NP)).